The sequence spans 916 residues: Translation initiation factor IF-2 (916 aa).

Residues 50–326 (NRDKESTSQP…NSTLQQGFNK (277 aa)) form a disordered region. Basic and acidic residues predominate over residues 109-241 (AQREAEEKAR…LAEENAEKWT (133 aa)). Positions 277–291 (GRGRAAKAPRPKKNN) are enriched in basic residues. Residues 292–304 (RHSEKADREEARA) are compositionally biased toward basic and acidic residues. In terms of domain architecture, tr-type G spans 415-584 (SRAPVVTIMG…LLQAEVLELK (170 aa)). Residues 424 to 431 (GHVDHGKT) are G1. 424–431 (GHVDHGKT) contributes to the GTP binding site. The interval 449-453 (GITQH) is G2. The G3 stretch occupies residues 470–473 (DTPG). Residues 470 to 474 (DTPGH) and 524 to 527 (NKID) contribute to the GTP site. The interval 524 to 527 (NKID) is G4. Positions 560 to 562 (SAK) are G5.

The protein belongs to the TRAFAC class translation factor GTPase superfamily. Classic translation factor GTPase family. IF-2 subfamily.

The protein resides in the cytoplasm. Its function is as follows. One of the essential components for the initiation of protein synthesis. Protects formylmethionyl-tRNA from spontaneous hydrolysis and promotes its binding to the 30S ribosomal subunits. Also involved in the hydrolysis of GTP during the formation of the 70S ribosomal complex. The chain is Translation initiation factor IF-2 from Proteus mirabilis (strain HI4320).